We begin with the raw amino-acid sequence, 529 residues long: Delayed-rectifier potassium channel regulatory subunit KCNS1 (529 aa).

Residues 1-217 (MLMLLVRGTH…LTMENPGYSL (217 aa)) lie on the Cytoplasmic side of the membrane. A helical membrane pass occupies residues 218–239 (PSKLFSCVSISVVLASIAAMCI). Residues 240–270 (HSLPEYQAREAAAAVAAVAAGRSPEGVRDDP) are Extracellular-facing. The chain crosses the membrane as a helical span at residues 271–293 (VLRRLEYFCIAWFSFEVSSRLLL). The Cytoplasmic portion of the chain corresponds to 294-304 (APSTRNFFCHP). A helical membrane pass occupies residues 305–322 (LNLIDIVSVLPFYLTLLA). Residues 323-340 (GVALGDQGGTGGKELGHL) are Extracellular-facing. The chain crosses the membrane as a helical; Voltage-sensor span at residues 341 to 361 (GKVVQVFRLMRIFRVLKLARH). At 362–376 (STGLRSLGATLKHSY) the chain is on the cytoplasmic side. The helical transmembrane segment at 377-398 (REVGILLLYLAVGVSVFSGVAY) threads the bilayer. The Extracellular segment spans residues 399–411 (TAEKEEDVGFNTI). Residues 412-423 (PACWWWGTVSMT) constitute an intramembrane region (helical). The short motif at 424-429 (TVGYGD) is the Selectivity filter element. Residues 424–431 (TVGYGDVV) lie within the membrane without spanning it. The Extracellular portion of the chain corresponds to 432-438 (PVTVAGK). Residues 439–467 (LAASGCILGGILVVALPITIIFNKFSHFY) form a helical membrane-spanning segment. At 468–529 (RRQKALEAAV…PSEPPHPQMY (62 aa)) the chain is on the cytoplasmic side. The segment at 494–529 (GVSEASLETSRETSQEGRSADLETQAPSEPPHPQMY) is disordered. The span at 502-514 (TSRETSQEGRSAD) shows a compositional bias: basic and acidic residues.

The protein belongs to the potassium channel family. S (TC 1.A.1.2) subfamily. Kv9.1/KCNS1 sub-subfamily. Heterotetramer with KCNB1. Heterotetramer with KCNB2. Does not form homomultimers.

It localises to the cell membrane. Potassium channel regulatory subunit that modulate the delayed rectifier voltage-gated potassium channel activity of KCNB1 and KCNB2 by altering their kinetics, expression levels, and shifting the half-inactivation potential to more polarized values. While it does not form functional channels on its own, it can form functional heterotetrameric channels with KCNB1 and KCNB2. Each regulatory subunit has unique regulatory properties that can lead to extensive inhibition, significant changes in kinetics, and/or substantial shifts in the voltage dependencies of the inactivation process. This chain is Delayed-rectifier potassium channel regulatory subunit KCNS1, found in Macaca mulatta (Rhesus macaque).